Here is a 482-residue protein sequence, read N- to C-terminus: Bifunctional protein GlmU (482 aa).

Positions 1-241 (MTASTEAAVV…SALVTGVNDR (241 aa)) are pyrophosphorylase. UDP-N-acetyl-alpha-D-glucosamine-binding positions include 12-15 (LAAG), K26, Q83, 88-89 (GT), 112-114 (SGD), G151, E166, N181, and N239. D114 is a Mg(2+) binding site. N239 is a Mg(2+) binding site. Residues 242–262 (VQLSDLGKVLNRRIVAAHQRA) form a linker region. The N-acetyltransferase stretch occupies residues 263–482 (GVTIIDPGST…AARKALGDES (220 aa)). The UDP-N-acetyl-alpha-D-glucosamine site is built by R344 and K362. The Proton acceptor role is filled by H374. Y377 and N388 together coordinate UDP-N-acetyl-alpha-D-glucosamine. Residues A391, 397–398 (NY), S416, and A434 contribute to the acetyl-CoA site. The disordered stretch occupies residues 463–482 (KKRPGSAADKAARKALGDES). Residues 472–482 (KAARKALGDES) show a composition bias toward basic and acidic residues.

It in the N-terminal section; belongs to the N-acetylglucosamine-1-phosphate uridyltransferase family. The protein in the C-terminal section; belongs to the transferase hexapeptide repeat family. In terms of assembly, homotrimer. The cofactor is Mg(2+).

Its subcellular location is the cytoplasm. The enzyme catalyses alpha-D-glucosamine 1-phosphate + acetyl-CoA = N-acetyl-alpha-D-glucosamine 1-phosphate + CoA + H(+). It carries out the reaction N-acetyl-alpha-D-glucosamine 1-phosphate + UTP + H(+) = UDP-N-acetyl-alpha-D-glucosamine + diphosphate. It functions in the pathway nucleotide-sugar biosynthesis; UDP-N-acetyl-alpha-D-glucosamine biosynthesis; N-acetyl-alpha-D-glucosamine 1-phosphate from alpha-D-glucosamine 6-phosphate (route II): step 2/2. It participates in nucleotide-sugar biosynthesis; UDP-N-acetyl-alpha-D-glucosamine biosynthesis; UDP-N-acetyl-alpha-D-glucosamine from N-acetyl-alpha-D-glucosamine 1-phosphate: step 1/1. Its pathway is bacterial outer membrane biogenesis; LPS lipid A biosynthesis. Functionally, catalyzes the last two sequential reactions in the de novo biosynthetic pathway for UDP-N-acetylglucosamine (UDP-GlcNAc). The C-terminal domain catalyzes the transfer of acetyl group from acetyl coenzyme A to glucosamine-1-phosphate (GlcN-1-P) to produce N-acetylglucosamine-1-phosphate (GlcNAc-1-P), which is converted into UDP-GlcNAc by the transfer of uridine 5-monophosphate (from uridine 5-triphosphate), a reaction catalyzed by the N-terminal domain. This chain is Bifunctional protein GlmU, found in Mycolicibacterium smegmatis (strain ATCC 700084 / mc(2)155) (Mycobacterium smegmatis).